The primary structure comprises 101 residues: Protein Tat (101 aa).

An interaction with human CREBBP region spans residues 1–24; it reads MEPVDPNREPWNHPGSQPKTACTN. Positions 1-48 are transactivation; that stretch reads MEPVDPNREPWNHPGSQPKTACTNCYCKKCCYHCQVCFLQKGLGISYG. Residues Cys22, Cys25, and Cys27 each contribute to the Zn(2+) site. The segment at 22-37 is cysteine-rich; sequence CTNCYCKKCCYHCQVC. At Lys28 the chain carries N6-acetyllysine; by host PCAF. Zn(2+) is bound by residues Cys30, His33, Cys34, and Cys37. Positions 38–48 are core; the sequence is FLQKGLGISYG. Positions 48–101 are disordered; sequence GRKKRRQRRSAPPGSKNHQDLIPEQPLFQTQRKPTGPEESKKEVESKAEPDRFD. The Nuclear localization signal, RNA-binding (TAR), and protein transduction motif lies at 49–57; the sequence is RKKRRQRRS. Residues 49-86 form an interaction with the host capping enzyme RNGTT region; it reads RKKRRQRRSAPPGSKNHQDLIPEQPLFQTQRKPTGPEE. Residues Lys50 and Lys51 each carry the N6-acetyllysine; by host EP300 and GCN5L2 modification. Asymmetric dimethylarginine; by host PRMT6 occurs at positions 52 and 53. Positions 82 to 101 are enriched in basic and acidic residues; that stretch reads TGPEESKKEVESKAEPDRFD.

It belongs to the lentiviruses Tat family. As to quaternary structure, interacts with host CCNT1. Associates with the P-TEFb complex composed at least of Tat, P-TEFb (CDK9 and CCNT1), TAR RNA, RNA Pol II. Recruits the HATs CREBBP, TAF1/TFIID, EP300, PCAF and GCN5L2. Interacts with host KAT5/Tip60; this interaction targets the latter to degradation. Interacts with the host deacetylase SIRT1. Interacts with host capping enzyme RNGTT; this interaction stimulates RNGTT. Binds to host KDR, and to the host integrins ITGAV/ITGB3 and ITGA5/ITGB1. Interacts with host KPNB1/importin beta-1 without previous binding to KPNA1/importin alpha-1. Interacts with EIF2AK2. Interacts with host nucleosome assembly protein NAP1L1; this interaction may be required for the transport of Tat within the nucleus, since the two proteins interact at the nuclear rim. Interacts with host C1QBP/SF2P32; this interaction involves lysine-acetylated Tat. Interacts with the host chemokine receptors CCR2, CCR3 and CXCR4. Interacts with host DPP4/CD26; this interaction may trigger an anti-proliferative effect. Interacts with host LDLR. Interacts with the host extracellular matrix metalloproteinase MMP1. Interacts with host PRMT6; this interaction mediates Tat's methylation. Interacts with, and is ubiquitinated by MDM2/Hdm2. Interacts with host PSMC3 and HTATIP2. Interacts with STAB1; this interaction may overcome SATB1-mediated repression of IL2 and IL2RA (interleukin) in T cells by binding to the same domain than HDAC1. Interacts (when acetylated) with human CDK13, thereby increasing HIV-1 mRNA splicing and promoting the production of the doubly spliced HIV-1 protein Nef. Interacts with host TBP; this interaction modulates the activity of transcriptional pre-initiation complex. Interacts with host RELA. Interacts with host PLSCR1; this interaction negatively regulates Tat transactivation activity by altering its subcellular distribution. Asymmetrical arginine methylation by host PRMT6 seems to diminish the transactivation capacity of Tat and affects the interaction with host CCNT1. In terms of processing, acetylation by EP300, CREBBP, GCN5L2/GCN5 and PCAF regulates the transactivation activity of Tat. EP300-mediated acetylation of Lys-50 promotes dissociation of Tat from the TAR RNA through the competitive binding to PCAF's bromodomain. In addition, the non-acetylated Tat's N-terminus can also interact with PCAF. PCAF-mediated acetylation of Lys-28 enhances Tat's binding to CCNT1. Lys-50 is deacetylated by SIRT1. Post-translationally, polyubiquitination by host MDM2 does not target Tat to degradation, but activates its transactivation function and fosters interaction with CCNT1 and TAR RNA. Phosphorylated by EIF2AK2 on serine and threonine residues adjacent to the basic region important for TAR RNA binding and function. Phosphorylation of Tat by EIF2AK2 is dependent on the prior activation of EIF2AK2 by dsRNA.

Its subcellular location is the host nucleus. It localises to the host nucleolus. It is found in the host cytoplasm. The protein resides in the secreted. Transcriptional activator that increases RNA Pol II processivity, thereby increasing the level of full-length viral transcripts. Recognizes a hairpin structure at the 5'-LTR of the nascent viral mRNAs referred to as the transactivation responsive RNA element (TAR) and recruits the cyclin T1-CDK9 complex (P-TEFb complex) that will in turn hyperphosphorylate the RNA polymerase II to allow efficient elongation. The CDK9 component of P-TEFb and other Tat-activated kinases hyperphosphorylate the C-terminus of RNA Pol II that becomes stabilized and much more processive. Other factors such as HTATSF1/Tat-SF1, SUPT5H/SPT5, and HTATIP2 are also important for Tat's function. Besides its effect on RNA Pol II processivity, Tat induces chromatin remodeling of proviral genes by recruiting the histone acetyltransferases (HATs) CREBBP, EP300 and PCAF to the chromatin. This also contributes to the increase in proviral transcription rate, especially when the provirus integrates in transcriptionally silent region of the host genome. To ensure maximal activation of the LTR, Tat mediates nuclear translocation of NF-kappa-B by interacting with host RELA. Through its interaction with host TBP, Tat may also modulate transcription initiation. Tat can reactivate a latently infected cell by penetrating in it and transactivating its LTR promoter. In the cytoplasm, Tat is thought to act as a translational activator of HIV-1 mRNAs. Functionally, extracellular circulating Tat can be endocytosed by surrounding uninfected cells via the binding to several surface receptors such as CD26, CXCR4, heparan sulfate proteoglycans (HSPG) or LDLR. Neurons are rarely infected, but they internalize Tat via their LDLR. Through its interaction with nuclear HATs, Tat is potentially able to control the acetylation-dependent cellular gene expression. Modulates the expression of many cellular genes involved in cell survival, proliferation or in coding for cytokines or cytokine receptors. Tat plays a role in T-cell and neurons apoptosis. Tat induced neurotoxicity and apoptosis probably contribute to neuroAIDS. Circulating Tat also acts as a chemokine-like and/or growth factor-like molecule that binds to specific receptors on the surface of the cells, affecting many cellular pathways. In the vascular system, Tat binds to ITGAV/ITGB3 and ITGA5/ITGB1 integrins dimers at the surface of endothelial cells and competes with bFGF for heparin-binding sites, leading to an excess of soluble bFGF. The chain is Protein Tat from Human immunodeficiency virus type 1 group M subtype J (isolate SE9173) (HIV-1).